A 79-amino-acid polypeptide reads, in one-letter code: Conotoxin ArMKLT2-031 (79 aa).

The N-terminal stretch at methionine 1–glycine 22 is a signal peptide. Residues glutamate 23–arginine 46 constitute a propeptide that is removed on maturation. Glutamine 47 carries the post-translational modification Pyrrolidone carboxylic acid. Intrachain disulfides connect cysteine 48/cysteine 62, cysteine 55/cysteine 66, and cysteine 61/cysteine 73.

It belongs to the conotoxin O1 superfamily. As to expression, expressed by the venom duct.

It localises to the secreted. This Conus arenatus (Sand-dusted cone) protein is Conotoxin ArMKLT2-031.